Consider the following 197-residue polypeptide: Phospholipid hydroperoxide glutathione peroxidase (197 aa).

Ser40 carries the phosphoserine modification. Residue Sec73 is part of the active site. Residue Sec73 is a non-standard amino acid, selenocysteine.

The protein belongs to the glutathione peroxidase family. Monomer. Has a tendency to form higher mass oligomers. Interacts with FUNDC1; this interaction promotes GPX4 recruitment into mitochondria through TOM/TIM complex where it is degraded by mitophagy.

The protein localises to the mitochondrion. It localises to the cytoplasm. It carries out the reaction a hydroperoxy polyunsaturated fatty acid + 2 glutathione = a hydroxy polyunsaturated fatty acid + glutathione disulfide + H2O. It catalyses the reaction 2 glutathione + H2O2 = glutathione disulfide + 2 H2O. The catalysed reaction is tert-butyl hydroperoxide + 2 glutathione = tert-butanol + glutathione disulfide + H2O. The enzyme catalyses cumene hydroperoxide + 2 glutathione = 2-phenylpropan-2-ol + glutathione disulfide + H2O. It carries out the reaction (9S)-hydroperoxy-(10E,12Z)-octadecadienoate + 2 glutathione = (9S)-hydroxy-(10E,12Z)-octadecadienoate + glutathione disulfide + H2O. It catalyses the reaction (13S)-hydroperoxy-(9Z,11E)-octadecadienoate + 2 glutathione = (13S)-hydroxy-(9Z,11E)-octadecadienoate + glutathione disulfide + H2O. The catalysed reaction is (5S)-hydroperoxy-(6E,8Z,11Z,14Z)-eicosatetraenoate + 2 glutathione = (5S)-hydroxy-(6E,8Z,11Z,14Z)-eicosatetraenoate + glutathione disulfide + H2O. The enzyme catalyses (12R)-hydroperoxy-(5Z,8Z,10E,14Z)-eicosatetraenoate + 2 glutathione = (12R)-hydroxy-(5Z,8Z,10E,14Z)-eicosatetraenoate + glutathione disulfide + H2O. It carries out the reaction (12S)-hydroperoxy-(5Z,8Z,10E,14Z)-eicosatetraenoate + 2 glutathione = (12S)-hydroxy-(5Z,8Z,10E,14Z)-eicosatetraenoate + glutathione disulfide + H2O. It catalyses the reaction (15S)-hydroperoxy-(5Z,8Z,11Z,13E)-eicosatetraenoate + 2 glutathione = (15S)-hydroxy-(5Z,8Z,11Z,13E)-eicosatetraenoate + glutathione disulfide + H2O. The catalysed reaction is (5S)-hydroperoxy-(6E,8Z,11Z,14Z,17Z)-eicosapentaenoate + 2 glutathione = (5S)-hydroxy-(6E,8Z,11Z,14Z,17Z)-eicosapentaenoate + glutathione disulfide + H2O. The enzyme catalyses (12S)-hydroperoxy-(5Z,8Z,10E,14Z,17Z)-eicosapentaenoate + 2 glutathione = (12S)-hydroxy-(5Z,8Z,10E,14Z,17Z)-eicosapentaenoate + glutathione disulfide + H2O. It carries out the reaction (15S)-hydroperoxy-(5Z,8Z,11Z,13E,17Z)-eicosapentaenoate + 2 glutathione = (15S)-hydroxy-(5Z,8Z,11Z,13E,17Z)-eicosapentaenoate + glutathione disulfide + H2O. It catalyses the reaction (15S)-hydroperoxy-(11Z,13E)-eicosadienoate + 2 glutathione = (15S)-hydroxy-(11Z,13E)-eicosadienoate + glutathione disulfide + H2O. The catalysed reaction is (17S)-hydroperoxy-(4Z,7Z,10Z,13Z,15E,19Z)-docosahexaenoate + 2 glutathione = (17S)-hydroxy-(4Z,7Z,10Z,13Z,15E,19Z)-docosahexaenoate + glutathione disulfide + H2O. The enzyme catalyses a hydroperoxy-1,2-diacyl-glycero-3-phosphocholine + 2 glutathione = a hydroxy-1,2-diacyl-glycero-3-phosphocholine + glutathione disulfide + H2O. Essential antioxidant peroxidase that directly reduces phospholipid hydroperoxide even if they are incorporated in membranes and lipoproteins. Can also reduce fatty acid hydroperoxide, cholesterol hydroperoxide and thymine hydroperoxide. Plays a key role in protecting cells from oxidative damage by preventing membrane lipid peroxidation. Required to prevent cells from ferroptosis, a non-apoptotic cell death resulting from an iron-dependent accumulation of lipid reactive oxygen species. The presence of selenocysteine (Sec) versus Cys at the active site is essential for life: it provides resistance to overoxidation and prevents cells against ferroptosis. The presence of Sec at the active site is also essential for the survival of a specific type of parvalbumin-positive interneurons, thereby preventing against fatal epileptic seizures. May be required to protect cells from the toxicity of ingested lipid hydroperoxides. Required for normal sperm development and male fertility. Essential for maturation and survival of photoreceptor cells. Plays a role in a primary T-cell response to viral and parasitic infection by protecting T-cells from ferroptosis and by supporting T-cell expansion. Plays a role of glutathione peroxidase in platelets in the arachidonic acid metabolism. Reduces hydroperoxy ester lipids formed by a 15-lipoxygenase that may play a role as down-regulator of the cellular 15-lipoxygenase pathway. Can also reduce small soluble hydroperoxides such as H2O2, cumene hydroperoxide and tert-butyl hydroperoxide. In Bos taurus (Bovine), this protein is Phospholipid hydroperoxide glutathione peroxidase.